The following is a 567-amino-acid chain: Geranylgeranyl transferase type-2 subunit alpha (567 aa).

6 PFTA repeats span residues 44–78, 88–122, 124–158, 159–193, 207–241, and 363–397; these read LDES…HLET, LVKA…RLPE, NWAR…QAAV, APAE…QLHP, VLLK…RAEP, and VLQS…ALDP. Residue Ser-98 is modified to Phosphoserine. LRR repeat units lie at residues 442–463, 464–486, 487–508, 509–530, and 534–555; these read DVRV…EQLL, LVTH…AALR, CLEV…ANLP, RLQE…QPLV, and RLVL…QERL.

It belongs to the protein prenyltransferase subunit alpha family. As to quaternary structure, heterotrimer composed of RABGGTA, RABGGTB and CHM; within this trimer, RABGGTA and RABGGTB form the catalytic component B, while CHM (component A) mediates peptide substrate binding. The Rab GGTase dimer (RGGT) interacts with CHM (component A) prior to Rab protein binding; the association is stabilized by geranylgeranyl pyrophosphate (GGpp). The CHM:RGGT:Rab complex is destabilized by GGpp. Interacts with non-phosphorylated form of RAB8A; phosphorylation of RAB8A at 'Thr-72' disrupts this interaction. In terms of tissue distribution, most abundant in the heart, brain, spleen and liver. Less in the lung, muscle, kidney and testis; in these tissues less abundant than the beta subunit.

It carries out the reaction geranylgeranyl diphosphate + L-cysteinyl-[protein] = S-geranylgeranyl-L-cysteinyl-[protein] + diphosphate. The enzymatic reaction requires the aid of a Rab escort protein (also called component A), such as CHM. Functionally, catalyzes the transfer of a geranylgeranyl moiety from geranylgeranyl diphosphate to both cysteines of Rab proteins with the C-terminal sequence -XXCC, -XCXC and -CCXX, such as RAB1A, RAB3A, RAB5A and RAB7A. The chain is Geranylgeranyl transferase type-2 subunit alpha (Rabggta) from Rattus norvegicus (Rat).